The chain runs to 332 residues: UPF0285 protein MK0078 (332 aa).

This sequence belongs to the UPF0285 family.

The polypeptide is UPF0285 protein MK0078 (Methanopyrus kandleri (strain AV19 / DSM 6324 / JCM 9639 / NBRC 100938)).